The following is a 115-amino-acid chain: Large ribosomal subunit protein uL22c (115 aa).

Belongs to the universal ribosomal protein uL22 family. Part of the 50S ribosomal subunit.

It localises to the plastid. Its subcellular location is the chloroplast. Functionally, this protein binds specifically to 23S rRNA. The globular domain of the protein is located near the polypeptide exit tunnel on the outside of the subunit, while an extended beta-hairpin is found that lines the wall of the exit tunnel in the center of the 70S ribosome. The sequence is that of Large ribosomal subunit protein uL22c (rpl22) from Phaeodactylum tricornutum (strain CCAP 1055/1).